The primary structure comprises 153 residues: Cornifin-B (153 aa).

Disordered regions lie at residues 1-35 (MSSH…PCVS) and 49-85 (CHPK…HPKA). Repeat copies occupy residues 27 to 34 (PPPPEPCV), 35 to 42 (SQVKTPCD), 43 to 50 (TKVPEPCH), 51 to 58 (PKAPEPCH), 59 to 66 (PKAPEPCH), 67 to 74 (PKAPEPCH), 75 to 82 (PKAPEPCH), 83 to 90 (PKAPEPCH), 91 to 98 (PKAPEPCH), 99 to 106 (PKAPEPCH), 107 to 114 (PKAPEPCH), 115 to 122 (PKVPEPCL), 123 to 130 (PKAPEPCQ), and 131 to 138 (PIVPEPCP). The interval 27 to 138 (PPPPEPCVSQ…CQPIVPEPCP (112 aa)) is 14 X 8 AA approximate tandem repeats.

It belongs to the cornifin (SPRR) family. As to expression, expressed in fetal periderm, hair follicles and in the thickened epidermis of the lip and footpad. Also present in the epithelia of various tissues such as the penis, vagina, forestomach, tongue and esophagus.

It is found in the cytoplasm. Functionally, cross-linked envelope protein of keratinocytes. It is a keratinocyte protein that first appears in the cell cytosol, but ultimately becomes cross-linked to membrane proteins by transglutaminase. All that results in the formation of an insoluble envelope beneath the plasma membrane. This chain is Cornifin-B (Sprr1b), found in Mus musculus (Mouse).